Consider the following 495-residue polypeptide: Serine/threonine protein phosphatase 2A 57 kDa regulatory subunit B' alpha isoform (495 aa).

Positions M1–A13 are enriched in basic residues. 2 disordered regions span residues M1–T61 and Q462–S495. Positions V49–T61 are enriched in polar residues.

This sequence belongs to the phosphatase 2A regulatory subunit B56 family. PP2A consists of a common heteromeric enzyme, composed of a catalytic subunit (subunits C), a constant regulatory subunit (subunit A), and a variety of regulatory subunits such as subunits B (the R2/B/PR55/B55, R3/B''/PR72/PR130/PR59 and R5/B'/B56 families). Interacts with BZR1. Interacts with BRI1. Interacts with SRK2E/OST1. In terms of tissue distribution, expressed ubiquitously, higher levels in leaves.

It localises to the nucleus. The protein resides in the cytoplasm. Its function is as follows. The B regulatory subunit may modulate substrate selectivity and catalytic activity, and may also direct the localization of the catalytic enzyme to a particular subcellular compartment. Required for the formation of the PP2A holoenzyme that positively regulates brassinosteroid signaling by dephosphorylating and activating BZR1. This Arabidopsis thaliana (Mouse-ear cress) protein is Serine/threonine protein phosphatase 2A 57 kDa regulatory subunit B' alpha isoform (B'ALPHA).